The following is a 159-amino-acid chain: Nascent polypeptide-associated complex subunit beta (159 aa).

Disordered regions lie at residues 1-39 and 124-159; these read MDME…GMDD and QSMQ…DKVE. A compositionally biased stretch (basic residues) spans 23 to 32; sequence TPRRKVKNVH. Positions 36–101 constitute an NAC-A/B domain; that stretch reads GMDDKKLQTS…GEDKELTELV (66 aa). Acidic residues predominate over residues 136-153; the sequence is KDDEEDDDDIPDLVEGEN.

It belongs to the NAC-beta family. Part of the nascent polypeptide-associated complex (NAC), consisting of EGD2 and EGD1. NAC associates with ribosomes via EGD1.

It localises to the cytoplasm. The protein localises to the nucleus. Functionally, component of the nascent polypeptide-associated complex (NAC), a dynamic component of the ribosomal exit tunnel, protecting the emerging polypeptides from interaction with other cytoplasmic proteins to ensure appropriate nascent protein targeting. The NAC complex also promotes mitochondrial protein import by enhancing productive ribosome interactions with the outer mitochondrial membrane and blocks the inappropriate interaction of ribosomes translating non-secretory nascent polypeptides with translocation sites in the membrane of the endoplasmic reticulum. EGD1 may act as a transcription factor that exert a negative effect on the expression of several genes that are transcribed by RNA polymerase II. This Sclerotinia sclerotiorum (strain ATCC 18683 / 1980 / Ss-1) (White mold) protein is Nascent polypeptide-associated complex subunit beta (egd1).